Reading from the N-terminus, the 207-residue chain is ConoCAP (207 aa).

Residues 1 to 21 form the signal peptide; sequence MVSLGHVLFVILLPVLLPVAA. Residues 22 to 48 constitute a propeptide that is removed on maturation; sequence DDPDDQMLSQISLPSSSRSEYDDNDVS. A disulfide bridge connects residues Cys-53 and Cys-59. Gly-60 carries the glycine amide modification. The propeptide occupies 63–82; that stretch reads HRDRSRRQERYGKRLIPVLA. A disulfide bridge links Cys-87 with Cys-92. Asn-94 carries the asparagine amide modification. Positions 98-160 are excised as a propeptide; it reads SLSGAGPALS…RDPAASGDLS (63 aa). Positions 131–155 are disordered; sequence ARHEQQQQLLQQREQRGLESRDPAA. A compositionally biased stretch (basic and acidic residues) spans 143-152; that stretch reads REQRGLESRD. Cysteines 165 and 171 form a disulfide. A Glycine amide modification is found at Gly-173. Residues 177 to 207 constitute a propeptide that is removed on maturation; the sequence is TLYSPWLERMNEVADDRSARNALCTRLGWRE.

Expressed by the venom duct.

The protein resides in the secreted. In terms of biological role, in contrast to other members of the CCAP family which are cardio-accelerators, conoCAP-a decreases the heart frequency in Drosophila larvae (26%), rats and zebrafish embryos. It also reduces the blood pressure in rats. It decreases systolic calcium in ventricular cardiac myocytes, indicating that it may act via impairment of intracellular calcium trafficking. Synthetic conoCAP-b decreases the heart frequency of 23% in Drosophila larvae. Its function is as follows. Synthetic conoCAP-c decreases the heart frequency of 12% in Drosophila larvae. This is ConoCAP (conoCAP) from Conus villepinii (Villepin's cone).